The chain runs to 533 residues: Light-independent protochlorophyllide reductase subunit B (533 aa).

Position 36 (Asp36) interacts with [4Fe-4S] cluster. Residue Asp292 is the Proton donor of the active site. Substrate is bound at residue 428 to 429 (GL).

It belongs to the ChlB/BchB/BchZ family. In terms of assembly, protochlorophyllide reductase is composed of three subunits; BchL, BchN and BchB. Forms a heterotetramer of two BchB and two BchN subunits. [4Fe-4S] cluster serves as cofactor.

It carries out the reaction chlorophyllide a + oxidized 2[4Fe-4S]-[ferredoxin] + 2 ADP + 2 phosphate = protochlorophyllide a + reduced 2[4Fe-4S]-[ferredoxin] + 2 ATP + 2 H2O. It participates in porphyrin-containing compound metabolism; bacteriochlorophyll biosynthesis (light-independent). Its function is as follows. Component of the dark-operative protochlorophyllide reductase (DPOR) that uses Mg-ATP and reduced ferredoxin to reduce ring D of protochlorophyllide (Pchlide) to form chlorophyllide a (Chlide). This reaction is light-independent. The NB-protein (BchN-BchB) is the catalytic component of the complex. The polypeptide is Light-independent protochlorophyllide reductase subunit B (Prosthecochloris aestuarii (strain DSM 271 / SK 413)).